Consider the following 366-residue polypeptide: Peroxisomal (S)-2-hydroxy-acid oxidase GLO4 (366 aa).

The FMN hydroxy acid dehydrogenase domain maps to 1-360 (MEDNLPVNVR…TRSHVMTEGD (360 aa)). Residue Tyr-27 participates in a 2-oxocarboxylate binding. FMN contacts are provided by residues 80–82 (PTG), Ser-109, 130–132 (QLY), and Thr-158. Residue Tyr-132 coordinates a 2-oxocarboxylate. An a 2-oxocarboxylate-binding site is contributed by Arg-167. FMN contacts are provided by Lys-231 and Ser-253. His-255 (proton acceptor) is an active-site residue. Arg-258 contributes to the a 2-oxocarboxylate binding site. FMN-binding positions include 286-290 (DGGIR) and 309-310 (GR). A Microbody targeting signal motif is present at residues 364–366 (SLL).

Belongs to the FMN-dependent alpha-hydroxy acid dehydrogenase family. Homotetramer. Binds to CATB and CATC; these interactions are disturbed by alpha-hydroxy-2-pyridinemethanesulfonic acid (HPMS) and salicylic acid (SA). FMN serves as cofactor.

The protein resides in the peroxisome. It carries out the reaction a (2S)-2-hydroxycarboxylate + O2 = a 2-oxocarboxylate + H2O2. It participates in lipid metabolism; fatty acid metabolism. Functionally, oxidase that catalyzes the oxidation of a broad range of 2-hydroxyacids to the corresponding 2-oxoacids, with a reduction of O2 to H2O2. May be involved in a general medium- and long-chain fatty acid catabolic pathway such as alpha-oxidation. The chain is Peroxisomal (S)-2-hydroxy-acid oxidase GLO4 (GLO4) from Oryza sativa subsp. japonica (Rice).